The sequence spans 341 residues: NADH-quinone oxidoreductase subunit H 1 (341 aa).

The next 8 helical transmembrane spans lie at 13–33 (LVVIGQSVLLLVILLIAIAYI), 82–102 (GLFLLAPLVTCVLALAAWAVI), 115–135 (VGVLYILAVSSLSVYGIIMAG), 161–181 (IGFVVICVLLCVGSLNLTAIV), 190–210 (MLGWYWLPLFPMFVVFYVSAL), 248–268 (YVAIVTMCAMGTILFLGGWLP), 277–297 (WVPGIVWFSLKLLFMFFLFAM), and 313–333 (LGWKVFLPLSLAMVVIVASVL).

Belongs to the complex I subunit 1 family. In terms of assembly, NDH-1 is composed of 14 different subunits. Subunits NuoA, H, J, K, L, M, N constitute the membrane sector of the complex.

Its subcellular location is the cell inner membrane. It carries out the reaction a quinone + NADH + 5 H(+)(in) = a quinol + NAD(+) + 4 H(+)(out). NDH-1 shuttles electrons from NADH, via FMN and iron-sulfur (Fe-S) centers, to quinones in the respiratory chain. The immediate electron acceptor for the enzyme in this species is believed to be ubiquinone. Couples the redox reaction to proton translocation (for every two electrons transferred, four hydrogen ions are translocated across the cytoplasmic membrane), and thus conserves the redox energy in a proton gradient. This subunit may bind ubiquinone. The chain is NADH-quinone oxidoreductase subunit H 1 from Rhodopseudomonas palustris (strain ATCC BAA-98 / CGA009).